An 804-amino-acid polypeptide reads, in one-letter code: Phenylalanine--tRNA ligase beta subunit (804 aa).

A tRNA-binding domain is found at 38-148 (RAAFRAFTIA…ENAPVGTSFA (111 aa)). The B5 domain maps to 401–476 (HTARVIDFPV…RIHGINRIDP (76 aa)). Mg(2+) is bound by residues Asp454, Asp460, Glu463, and Glu464. In terms of domain architecture, FDX-ACB spans 710-803 (SLFQSLKRDY…VAKQTGGVLR (94 aa)).

Belongs to the phenylalanyl-tRNA synthetase beta subunit family. Type 1 subfamily. Tetramer of two alpha and two beta subunits. It depends on Mg(2+) as a cofactor.

Its subcellular location is the cytoplasm. The catalysed reaction is tRNA(Phe) + L-phenylalanine + ATP = L-phenylalanyl-tRNA(Phe) + AMP + diphosphate + H(+). The protein is Phenylalanine--tRNA ligase beta subunit of Brucella abortus (strain 2308).